A 365-amino-acid polypeptide reads, in one-letter code: Alanine racemase (365 aa).

Lysine 32 serves as the catalytic Proton acceptor; specific for D-alanine. Lysine 32 carries the N6-(pyridoxal phosphate)lysine modification. Arginine 128 contributes to the substrate binding site. Catalysis depends on tyrosine 257, which acts as the Proton acceptor; specific for L-alanine. Methionine 305 contributes to the substrate binding site.

Belongs to the alanine racemase family. The cofactor is pyridoxal 5'-phosphate.

The catalysed reaction is L-alanine = D-alanine. It functions in the pathway amino-acid biosynthesis; D-alanine biosynthesis; D-alanine from L-alanine: step 1/1. Its function is as follows. Catalyzes the interconversion of L-alanine and D-alanine. May also act on other amino acids. This Francisella tularensis subsp. tularensis (strain SCHU S4 / Schu 4) protein is Alanine racemase (alr).